Reading from the N-terminus, the 393-residue chain is Lipid-A-disaccharide synthase (393 aa).

Belongs to the LpxB family.

The catalysed reaction is a lipid X + a UDP-2-N,3-O-bis[(3R)-3-hydroxyacyl]-alpha-D-glucosamine = a lipid A disaccharide + UDP + H(+). It functions in the pathway bacterial outer membrane biogenesis; LPS lipid A biosynthesis. Condensation of UDP-2,3-diacylglucosamine and 2,3-diacylglucosamine-1-phosphate to form lipid A disaccharide, a precursor of lipid A, a phosphorylated glycolipid that anchors the lipopolysaccharide to the outer membrane of the cell. In Bordetella pertussis (strain Tohama I / ATCC BAA-589 / NCTC 13251), this protein is Lipid-A-disaccharide synthase.